Here is a 106-residue protein sequence, read N- to C-terminus: Small ribosomal subunit protein uS10 (106 aa).

It belongs to the universal ribosomal protein uS10 family. Part of the 30S ribosomal subunit.

Involved in the binding of tRNA to the ribosomes. The polypeptide is Small ribosomal subunit protein uS10 (Solibacter usitatus (strain Ellin6076)).